Reading from the N-terminus, the 315-residue chain is Putative carboxypeptidase RC0549 (315 aa).

Residue serine 125 is the Nucleophile of the active site. Catalysis depends on charge relay system residues glutamate 225 and histidine 288.

This sequence belongs to the peptidase S66 family.

This Rickettsia conorii (strain ATCC VR-613 / Malish 7) protein is Putative carboxypeptidase RC0549.